A 590-amino-acid chain; its full sequence is Putative histone-lysine N-methyltransferase PRDM6 (590 aa).

The tract at residues 25-87 is disordered; that stretch reads QLFPHGGGGP…STPASSSTSA (63 aa). Gly residues predominate over residues 29 to 42; the sequence is HGGGGPLKGGGAAG. Over residues 71–87 the composition is skewed to low complexity; that stretch reads ASLSSASSTPASSSTSA. Positions 241–360 constitute an SET domain; the sequence is REVCLCTSTV…RGTELLVWYN (120 aa). The C2H2-type 1; degenerate zinc-finger motif lies at 468–490; sequence WKCGQCFKTFTQRILLQMHVCTQ. C2H2-type zinc fingers lie at residues 496–518 and 524–546; these read YQCGHCSQSFSQPSELRNHVVTH and FKCGYCGRAFAGATTLNNHIRTH. The C2H2-type 4; degenerate zinc finger occupies 552–574; sequence FKCERCERSFTQATQLSRHQRMP.

It belongs to the class V-like SAM-binding methyltransferase superfamily. Interacts with HDAC1, HDAC2, HDAC3, CBX1 and EP300.

Its subcellular location is the nucleus. It catalyses the reaction L-lysyl(20)-[histone H4] + S-adenosyl-L-methionine = N(6)-methyl-L-lysyl(20)-[histone H4] + S-adenosyl-L-homocysteine + H(+). Its function is as follows. Putative histone methyltransferase that acts as a transcriptional repressor of smooth muscle gene expression. Promotes the transition from differentiated to proliferative smooth muscle by suppressing differentiation and maintaining the proliferative potential of vascular smooth muscle cells. Also plays a role in endothelial cells by inhibiting endothelial cell proliferation, survival and differentiation. It is unclear whether it has histone methyltransferase activity in vivo. According to some authors, it does not act as a histone methyltransferase by itself and represses transcription by recruiting EHMT2/G9a. According to others, it possesses histone methyltransferase activity when associated with other proteins and specifically methylates 'Lys-20' of histone H4 in vitro. 'Lys-20' methylation represents a specific tag for epigenetic transcriptional repression. In Bos taurus (Bovine), this protein is Putative histone-lysine N-methyltransferase PRDM6 (PRDM6).